A 62-amino-acid chain; its full sequence is Large ribosomal subunit protein bL28 (62 aa).

This sequence belongs to the bacterial ribosomal protein bL28 family.

This chain is Large ribosomal subunit protein bL28, found in Wolinella succinogenes (strain ATCC 29543 / DSM 1740 / CCUG 13145 / JCM 31913 / LMG 7466 / NCTC 11488 / FDC 602W) (Vibrio succinogenes).